The sequence spans 62 residues: uncharacterized protein (62 aa).

This is an uncharacterized protein from Acidianus filamentous virus 2 (isolate Italy/Pozzuoli) (AFV-2).